A 562-amino-acid chain; its full sequence is Protein wntless (562 aa).

The Cytoplasmic segment spans residues 1 to 13 (MSGTILENLSGRK). The chain crosses the membrane as a helical span at residues 14-34 (LSILVGSLLLCQVLCFLLGGL). Residues 35-239 (YAPVPAGHTN…AIHQNGGFTH (205 aa)) lie on the Lumenal side of the membrane. An N-linked (GlcNAc...) asparagine glycan is attached at Asn-58. A helical transmembrane segment spans residues 240–260 (VWLMLKTLLFPFVVGIMVWFW). The Cytoplasmic portion of the chain corresponds to 261–270 (RRVHLLQRSP). A helical transmembrane segment spans residues 271 to 291 (ALLEYMLLYLGGALTFLNLPL). At 292–311 (EYLSLTIEMPYMLLLSDIRQ) the chain is on the lumenal side. Residues 312–332 (GIFYAMLLSFWLVFAGEHMLI) form a helical membrane-spanning segment. The Cytoplasmic segment spans residues 333 to 344 (QDSHNKSTIRSR). The chain crosses the membrane as a helical span at residues 345–365 (YWKHLSAVVVGCISLFVFDIS). Residues 366–386 (ERGVQLRNPFYSIWTTPLGAK) lie on the Lumenal side of the membrane. Residues 387-407 (VAMSFILLAGVSAAVYFLFLC) form a helical membrane-spanning segment. The Cytoplasmic segment spans residues 408 to 441 (YMISKVFKNIGDKRTSLPSMSQARRLHYEGLIYR). Residues 442–462 (FKFLMLATLLCAALTVTGFIM) traverse the membrane as a helical segment. Residues 463–482 (GQMAEGQWKWNDDVEIQLTS) lie on the Lumenal side of the membrane. Residues 483-503 (AFLTGVYGMWNIYIFALLILY) traverse the membrane as a helical segment. Over 504–562 (APSHKQWPTMHHSDETTQSNENIVASAASEEIEFSNLPSDSNPSEISSLTSFTRKVAFE) the chain is Cytoplasmic. The interval 538-562 (SNLPSDSNPSEISSLTSFTRKVAFE) is disordered. Positions 539–556 (NLPSDSNPSEISSLTSFT) are enriched in polar residues.

This sequence belongs to the wntless family. As to quaternary structure, interacts with wg; in the Golgi. Interacts with Vps35, a component of the retromer complex; wls stability is regulated by Vps35.

Its subcellular location is the presynaptic cell membrane. The protein resides in the postsynaptic cell membrane. The protein localises to the cell membrane. It is found in the endoplasmic reticulum membrane. It localises to the endosome membrane. Its subcellular location is the golgi apparatus membrane. A segment polarity gene required for wingless (wg)-dependent patterning processes, acting in both wg-sending cells and wg-target cells. In non-neuronal cells wls directs wg secretion. The wls traffic loop encompasses the Golgi, the cell surface, an endocytic compartment and a retrograde route leading back to the Golgi, and involves clathrin-mediated endocytosis and the retromer complex (a conserved protein complex consisting of Vps35 and Vps26). In neuronal cells (the larval motorneuron NMJ), the wg signal moves across the synapse via the release of wls-containing exosome-like vesicles. Postsynaptic wls is required for the trafficking of fz2 through the fz2-interacting protein Grip. In Drosophila persimilis (Fruit fly), this protein is Protein wntless.